The sequence spans 645 residues: MNLCSSGATASTTSLSSTGQAERSGGVPGGGAEGGGGDGGSGNSGGGGSKTNDGSTEAPTLCFAGGSGTAGAIVGSAELSNANSPANGAGGASGSTGSGQQPTGSNGHSHLHNENNANMPPETRPKMVTVKHPESNKPKPTTKKSKPIQADQDVIKALQRCRDEGIKRLDLSKSSITVIPSTVKECVHLTELYLYSNKIGQLPPEIGCLVSLRNLALNENSLTSLPESLQNCSQLKVLDLRHNKLAEIPPVIYRLRSLTTLYLRFNRITAVADDLRQLVNLTMLSLRENKIRELGSAIGALVNLTTLDVSHNHLEHLPEDIGNCVNLSALDLQHNELLDIPDSIGNLKSLVRLGMRYNRLSSVPATLKNCKSMDEFNVEGNGITQLPDGMLASLSGLTTITLSRNQFASYPTGGPAQFTNVYSINLEHNRIDKIPYGIFSRAKGLTKLNMKENMLTALPLDIGTWVNMVELNLATNALQKLPDDIMNLQNLEILILSNNMLKKIPNTIGNLRRLRILDLEENRIEVLPHEIGLLHELQRLILQTNQITMLPRSIGHLGNLTHLSVSENNLQFLPEEIGSLESLENLYINQNPGLEKLPFELALCQNLKYLNIDKCPLSTIPPEIQAGGPSLVLQWLKMHSPYRQM.

The segment covering 1-19 has biased composition (low complexity); that stretch reads MNLCSSGATASTTSLSSTG. 2 disordered regions span residues 1–67 and 83–151; these read MNLC…AGGS and NSPA…IQAD. 2 stretches are compositionally biased toward gly residues: residues 26-49 and 88-97; these read GVPGGGAEGGGGDGGSGNSGGGGS and GAGGASGSTG. A compositionally biased stretch (low complexity) spans 98–107; it reads SGQQPTGSNG. 20 LRR repeats span residues 165–186, 188–209, 211–232, 234–255, 257–278, 280–301, 303–324, 326–347, 349–371, 372–393, 396–417, 420–441, 444–465, 467–488, 490–511, 513–534, 536–557, 559–580, 582–604, and 606–627; these read GIKRLDLSKSSITVIPSTVKEC, HLTELYLYSNKIGQLPPEIGCL, SLRNLALNENSLTSLPESLQNC, QLKVLDLRHNKLAEIPPVIYRL, SLTTLYLRFNRITAVADDLRQL, NLTMLSLRENKIRELGSAIGAL, NLTTLDVSHNHLEHLPEDIGNC, NLSALDLQHNELLDIPDSIGNL, SLVRLGMRYNRLSSVPATLKNCK, SMDEFNVEGNGITQLPDGMLAS, GLTTITLSRNQFASYPTGGPAQ, NVYSINLEHNRIDKIPYGIFSR, GLTKLNMKENMLTALPLDIGTW, NMVELNLATNALQKLPDDIMNL, NLEILILSNNMLKKIPNTIGNL, RLRILDLEENRIEVLPHEIGLL, ELQRLILQTNQITMLPRSIGHL, NLTHLSVSENNLQFLPEEIGSL, SLENLYINQNPGLEKLPFELALC, and NLKYLNIDKCPLSTIPPEIQAG.

This sequence belongs to the SHOC2 family.

Functionally, acts as a Ras effector and participates in MAPK pathway activation. Probably acts as a regulatory subunit of protein phosphatase that specifically dephosphorylates Raf kinase and stimulate Raf activity at specialized signaling complexes upon Ras activation. This is Leucine-rich repeat protein soc-2 homolog (Sur-8) from Drosophila yakuba (Fruit fly).